The chain runs to 263 residues: tRNA (guanine-N(1)-)-methyltransferase (263 aa).

Residues G124 and 144–149 contribute to the S-adenosyl-L-methionine site; that span reads LGDFVL.

Belongs to the RNA methyltransferase TrmD family. As to quaternary structure, homodimer.

The protein resides in the cytoplasm. It catalyses the reaction guanosine(37) in tRNA + S-adenosyl-L-methionine = N(1)-methylguanosine(37) in tRNA + S-adenosyl-L-homocysteine + H(+). In terms of biological role, specifically methylates guanosine-37 in various tRNAs. In Aromatoleum aromaticum (strain DSM 19018 / LMG 30748 / EbN1) (Azoarcus sp. (strain EbN1)), this protein is tRNA (guanine-N(1)-)-methyltransferase.